The primary structure comprises 421 residues: Gamma-glutamyl phosphate reductase (421 aa).

This sequence belongs to the gamma-glutamyl phosphate reductase family.

The protein localises to the cytoplasm. It catalyses the reaction L-glutamate 5-semialdehyde + phosphate + NADP(+) = L-glutamyl 5-phosphate + NADPH + H(+). It functions in the pathway amino-acid biosynthesis; L-proline biosynthesis; L-glutamate 5-semialdehyde from L-glutamate: step 2/2. In terms of biological role, catalyzes the NADPH-dependent reduction of L-glutamate 5-phosphate into L-glutamate 5-semialdehyde and phosphate. The product spontaneously undergoes cyclization to form 1-pyrroline-5-carboxylate. This Nocardia farcinica (strain IFM 10152) protein is Gamma-glutamyl phosphate reductase.